A 169-amino-acid polypeptide reads, in one-letter code: Succinate dehydrogenase cytochrome b560 subunit, mitochondrial (169 aa).

The transit peptide at 1 to 29 (MAAFLLRHVSRHCLRAHLNAQLCIRNAAP) directs the protein to the mitochondrion. Over 30–62 (LGTTAKEEMERFWKKNTSSNRPLSPHLTIYKWS) the chain is Mitochondrial matrix. A helical transmembrane segment spans residues 63-92 (LPMALSVCHRGSGIALSGGVSLFGLSALLL). Residues 93 to 112 (PGNFESYLMFVKSLCLGPTL) lie on the Mitochondrial intermembrane side of the membrane. The helical transmembrane segment at 113–137 (IYSAKFVLVFPLMYHSLNGIRHLLW) threads the bilayer. His127 provides a ligand contact to heme b. Residues 138 to 144 (DLGKGLA) lie on the Mitochondrial matrix side of the membrane. Residues 145–166 (IPQVWLSGVAVVVLAVLSSGGL) traverse the membrane as a helical segment. Over 167–169 (AAL) the chain is Mitochondrial intermembrane.

This sequence belongs to the cytochrome b560 family. As to quaternary structure, component of complex II composed of four subunits: the flavoprotein (FP) SDHA, iron-sulfur protein (IP) SDHB, and a cytochrome b560 composed of SDHC and SDHD. Heme b serves as cofactor.

Its subcellular location is the mitochondrion inner membrane. It participates in carbohydrate metabolism; tricarboxylic acid cycle. In terms of biological role, membrane-anchoring subunit of succinate dehydrogenase (SDH) that is involved in complex II of the mitochondrial electron transport chain and is responsible for transferring electrons from succinate to ubiquinone (coenzyme Q). SDH also oxidizes malate to the non-canonical enol form of oxaloacetate, enol-oxaloacetate. Enol-oxaloacetate, which is a potent inhibitor of the succinate dehydrogenase activity, is further isomerized into keto-oxaloacetate. The polypeptide is Succinate dehydrogenase cytochrome b560 subunit, mitochondrial (Sdhc) (Mus musculus (Mouse)).